Consider the following 100-residue polypeptide: MRLSPHEQERLLLSYAAELARRRRQRGLVLNHPEAVALITDHLLEGARDGRSVAELMVSGREVLTRADVMEGVPEMLHDVQVEATFPDGTKLVTVHDPIA.

Belongs to the urease gamma subunit family. As to quaternary structure, heterotrimer of UreA (gamma), UreB (beta) and UreC (alpha) subunits. Three heterotrimers associate to form the active enzyme.

The protein localises to the cytoplasm. The catalysed reaction is urea + 2 H2O + H(+) = hydrogencarbonate + 2 NH4(+). It functions in the pathway nitrogen metabolism; urea degradation; CO(2) and NH(3) from urea (urease route): step 1/1. The chain is Urease subunit gamma from Rhodococcus opacus (strain B4).